A 93-amino-acid chain; its full sequence is UPF0147 protein MM_1385 (93 aa).

It belongs to the UPF0147 family.

The protein is UPF0147 protein MM_1385 of Methanosarcina mazei (strain ATCC BAA-159 / DSM 3647 / Goe1 / Go1 / JCM 11833 / OCM 88) (Methanosarcina frisia).